The sequence spans 255 residues: tRNA (guanine-N(7)-)-methyltransferase (255 aa).

Residues 1 to 29 (MSDSDASRPSAIASDGPDAAGKHASGAPW) form a disordered region. S-adenosyl-L-methionine-binding residues include Glu-86, Glu-111, Asp-138, and Asp-160. Asp-160 is an active-site residue. Residues Lys-164, Asp-196, and 233-236 (TRYE) contribute to the substrate site.

It belongs to the class I-like SAM-binding methyltransferase superfamily. TrmB family.

It catalyses the reaction guanosine(46) in tRNA + S-adenosyl-L-methionine = N(7)-methylguanosine(46) in tRNA + S-adenosyl-L-homocysteine. The protein operates within tRNA modification; N(7)-methylguanine-tRNA biosynthesis. Catalyzes the formation of N(7)-methylguanine at position 46 (m7G46) in tRNA. This Ruegeria sp. (strain TM1040) (Silicibacter sp.) protein is tRNA (guanine-N(7)-)-methyltransferase.